Here is a 307-residue protein sequence, read N- to C-terminus: Oxygen-dependent coproporphyrinogen-III oxidase (307 aa).

Ser-99 is a substrate binding site. A divalent metal cation is bound by residues His-103 and His-113. Residue His-113 is the Proton donor of the active site. Substrate is bound at residue 115 to 117 (NVR). 2 residues coordinate a divalent metal cation: His-152 and His-182. Residues 247–282 (YVEFNLVFDRGTLFGLQSGGRTESILMSMPPVANWR) are important for dimerization. 265–267 (GGR) serves as a coordination point for substrate.

This sequence belongs to the aerobic coproporphyrinogen-III oxidase family. As to quaternary structure, homodimer. Requires a divalent metal cation as cofactor.

It is found in the cytoplasm. The enzyme catalyses coproporphyrinogen III + O2 + 2 H(+) = protoporphyrinogen IX + 2 CO2 + 2 H2O. Its pathway is porphyrin-containing compound metabolism; protoporphyrin-IX biosynthesis; protoporphyrinogen-IX from coproporphyrinogen-III (O2 route): step 1/1. In terms of biological role, involved in the heme biosynthesis. Catalyzes the aerobic oxidative decarboxylation of propionate groups of rings A and B of coproporphyrinogen-III to yield the vinyl groups in protoporphyrinogen-IX. The polypeptide is Oxygen-dependent coproporphyrinogen-III oxidase (Burkholderia cenocepacia (strain ATCC BAA-245 / DSM 16553 / LMG 16656 / NCTC 13227 / J2315 / CF5610) (Burkholderia cepacia (strain J2315))).